The primary structure comprises 295 residues: Pyridoxal 5'-phosphate synthase subunit PdxS (295 aa).

Asp-25 contacts D-ribose 5-phosphate. Lys-82 functions as the Schiff-base intermediate with D-ribose 5-phosphate in the catalytic mechanism. Residue Gly-154 participates in D-ribose 5-phosphate binding. Arg-166 lines the D-glyceraldehyde 3-phosphate pocket. D-ribose 5-phosphate-binding positions include Gly-215 and 236–237 (GS).

The protein belongs to the PdxS/SNZ family. In the presence of PdxT, forms a dodecamer of heterodimers.

It catalyses the reaction aldehydo-D-ribose 5-phosphate + D-glyceraldehyde 3-phosphate + L-glutamine = pyridoxal 5'-phosphate + L-glutamate + phosphate + 3 H2O + H(+). It functions in the pathway cofactor biosynthesis; pyridoxal 5'-phosphate biosynthesis. Its function is as follows. Catalyzes the formation of pyridoxal 5'-phosphate from ribose 5-phosphate (RBP), glyceraldehyde 3-phosphate (G3P) and ammonia. The ammonia is provided by the PdxT subunit. Can also use ribulose 5-phosphate and dihydroxyacetone phosphate as substrates, resulting from enzyme-catalyzed isomerization of RBP and G3P, respectively. The polypeptide is Pyridoxal 5'-phosphate synthase subunit PdxS (Shouchella clausii (strain KSM-K16) (Alkalihalobacillus clausii)).